A 137-amino-acid chain; its full sequence is MPTINQLVRKPRKSKVEKSKSPALNVGYNSHKKVQTNVSSPQKRGVATRVGTMTPKKPNSALRKFARVRLSNLIEVTAYIPGIGHNLQEHSVVLLRGGRVKDLPGVRYHIVRGALDTAGVNDRKQGRSKYGTKRPKA.

The tract at residues 1–57 is disordered; it reads MPTINQLVRKPRKSKVEKSKSPALNVGYNSHKKVQTNVSSPQKRGVATRVGTMTPKK. Asp-102 carries the post-translational modification 3-methylthioaspartic acid.

This sequence belongs to the universal ribosomal protein uS12 family. As to quaternary structure, part of the 30S ribosomal subunit. Contacts proteins S8 and S17. May interact with IF1 in the 30S initiation complex.

In terms of biological role, with S4 and S5 plays an important role in translational accuracy. Interacts with and stabilizes bases of the 16S rRNA that are involved in tRNA selection in the A site and with the mRNA backbone. Located at the interface of the 30S and 50S subunits, it traverses the body of the 30S subunit contacting proteins on the other side and probably holding the rRNA structure together. The combined cluster of proteins S8, S12 and S17 appears to hold together the shoulder and platform of the 30S subunit. This is Small ribosomal subunit protein uS12 from Streptococcus pneumoniae serotype 2 (strain D39 / NCTC 7466).